The sequence spans 408 residues: S-adenosylmethionine synthase (408 aa).

140–145 (GQGSVD) is an ATP binding site.

The protein belongs to the AdoMet synthase 2 family. Mg(2+) is required as a cofactor.

The catalysed reaction is L-methionine + ATP + H2O = S-adenosyl-L-methionine + phosphate + diphosphate. It participates in amino-acid biosynthesis; S-adenosyl-L-methionine biosynthesis; S-adenosyl-L-methionine from L-methionine: step 1/1. Catalyzes the formation of S-adenosylmethionine from methionine and ATP. The sequence is that of S-adenosylmethionine synthase from Caldivirga maquilingensis (strain ATCC 700844 / DSM 13496 / JCM 10307 / IC-167).